Consider the following 563-residue polypeptide: MMISEKPLGVEESIRQDLEVLTVSRRLVKSVSQKLKKKIHKTEVVEDEEIARGAVNCLSISVGCRVADTGEDFEDSSNKRWSSASEEGKGLMTICGTEETRLDCFSYGVRERFWKKNNRKYLADSGQDYRKHVYLPDDILEMCLMRLPLTSLLNAHLVCKKWQSMANTQRFLQMRREGSFQTPWLFLFAALKDGCSSGDIHGYDVSQDKWHRIETDLLKGRFMYSVTSIHEEIYIVGGRSMDRNSFKSHRGILVFSPSIKAWRKIASMRHARSLPIVGATEVTSEFSTMQTKQNRQDRRFHLSRVGGESDVYEDPHRLSVRRQNRNSADQNGTKSHRLIRQKLDRLNRNSSKRFVLIAIGGTGLFDEPLDSGEIYDSATNTWSEMQRLPMGFGVVSCGIICNGIFYAYSENDKLSGYDIERGFWITIQTSPIPPRVHEFYPKLVSCNHRLFMLSVSWCDEGDGQIGRRNKAVRKLWELDLVYLTWTEVSVHPDAPMDWNATYVSDQNILMGIEMFKIFGQVLSFFTVCDVLTEEASWRHVSRNQRSQKLNLSCTNKTIALLHL.

Residues 129–175 form the F-box domain; it reads YRKHVYLPDDILEMCLMRLPLTSLLNAHLVCKKWQSMANTQRFLQMR. Kelch repeat units follow at residues 184 to 231, 232 to 282, and 355 to 402; these read WLFL…SIHE, EIYI…ATEV, and VLIA…IICN.

The polypeptide is F-box/kelch-repeat protein At5g42350 (Arabidopsis thaliana (Mouse-ear cress)).